A 262-amino-acid chain; its full sequence is Small ribosomal subunit protein uS2 (262 aa).

The tract at residues glycine 224–serine 246 is disordered.

The protein belongs to the universal ribosomal protein uS2 family.

This is Small ribosomal subunit protein uS2 from Lacticaseibacillus casei (strain BL23) (Lactobacillus casei).